The following is a 568-amino-acid chain: Proline--tRNA ligase (568 aa).

It belongs to the class-II aminoacyl-tRNA synthetase family. ProS type 1 subfamily. In terms of assembly, homodimer.

It localises to the cytoplasm. It carries out the reaction tRNA(Pro) + L-proline + ATP = L-prolyl-tRNA(Pro) + AMP + diphosphate. Its function is as follows. Catalyzes the attachment of proline to tRNA(Pro) in a two-step reaction: proline is first activated by ATP to form Pro-AMP and then transferred to the acceptor end of tRNA(Pro). As ProRS can inadvertently accommodate and process non-cognate amino acids such as alanine and cysteine, to avoid such errors it has two additional distinct editing activities against alanine. One activity is designated as 'pretransfer' editing and involves the tRNA(Pro)-independent hydrolysis of activated Ala-AMP. The other activity is designated 'posttransfer' editing and involves deacylation of mischarged Ala-tRNA(Pro). The misacylated Cys-tRNA(Pro) is not edited by ProRS. The sequence is that of Proline--tRNA ligase from Aliarcobacter butzleri (strain RM4018) (Arcobacter butzleri).